We begin with the raw amino-acid sequence, 413 residues long: Alpha-1-antitrypsin 1-4 (413 aa).

The N-terminal stretch at 1–24 (MTPSISWSLLLLAGLCCLVPSFLA) is a signal peptide. Asn64, Asn101, and Asn265 each carry an N-linked (GlcNAc...) asparagine glycan. The tract at residues 368-387 (AATVLQVATYSMPPIVRFDH) is RCL.

It belongs to the serpin family.

It localises to the secreted. Inhibitor of serine proteases. Can inhibit trypsin and chymotrypsin; relatively ineffective against elastase. The sequence is that of Alpha-1-antitrypsin 1-4 (Serpina1d) from Mus musculus (Mouse).